A 156-amino-acid polypeptide reads, in one-letter code: Deoxyuridine 5'-triphosphate nucleotidohydrolase (156 aa).

Substrate contacts are provided by residues R76–G78, N89, T93–D95, and K103.

Belongs to the dUTPase family. Mg(2+) serves as cofactor.

It carries out the reaction dUTP + H2O = dUMP + diphosphate + H(+). The protein operates within pyrimidine metabolism; dUMP biosynthesis; dUMP from dCTP (dUTP route): step 2/2. In terms of biological role, this enzyme is involved in nucleotide metabolism: it produces dUMP, the immediate precursor of thymidine nucleotides and it decreases the intracellular concentration of dUTP so that uracil cannot be incorporated into DNA. In Rhizobium rhizogenes (strain K84 / ATCC BAA-868) (Agrobacterium radiobacter), this protein is Deoxyuridine 5'-triphosphate nucleotidohydrolase.